The primary structure comprises 411 residues: Serine hydroxymethyltransferase (411 aa).

120–122 (GHL) contacts (6S)-5,6,7,8-tetrahydrofolate. Lys225 carries the N6-(pyridoxal phosphate)lysine modification. 350–352 (SPF) lines the (6S)-5,6,7,8-tetrahydrofolate pocket.

It belongs to the SHMT family. Homodimer. The cofactor is pyridoxal 5'-phosphate.

The protein resides in the cytoplasm. The enzyme catalyses (6R)-5,10-methylene-5,6,7,8-tetrahydrofolate + glycine + H2O = (6S)-5,6,7,8-tetrahydrofolate + L-serine. The protein operates within one-carbon metabolism; tetrahydrofolate interconversion. It participates in amino-acid biosynthesis; glycine biosynthesis; glycine from L-serine: step 1/1. Functionally, catalyzes the reversible interconversion of serine and glycine with tetrahydrofolate (THF) serving as the one-carbon carrier. This reaction serves as the major source of one-carbon groups required for the biosynthesis of purines, thymidylate, methionine, and other important biomolecules. Also exhibits THF-independent aldolase activity toward beta-hydroxyamino acids, producing glycine and aldehydes, via a retro-aldol mechanism. The sequence is that of Serine hydroxymethyltransferase from Lactobacillus johnsonii (strain CNCM I-12250 / La1 / NCC 533).